A 459-amino-acid polypeptide reads, in one-letter code: Carbonic anhydrase 9 (459 aa).

The signal sequence occupies residues 1–37 (MAPLCPSPWLPLLIPAPAPGLTVQLLLSLLLLVPVHP). Residues 38–112 (QRLPRMQEDS…EEEGSLKLED (75 aa)) form a proteoglycan-like (PG) region. The Extracellular segment spans residues 38–414 (QRLPRMQEDS…QLNSCLAAGD (377 aa)). The segment at 42-154 (RMQEDSPLGG…GDPPWPRVSP (113 aa)) is disordered. Acidic residues predominate over residues 55–95 (GEDDPLGEEDLPSEEDSPREEDPPGEEDLPGEEDLPGEEDL). Positions 96 to 112 (PEVKPKSEEEGSLKLED) are enriched in basic and acidic residues. O-linked (GlcNAc...) threonine glycosylation occurs at T115. Over residues 129–140 (AHRDKEGDDQSH) the composition is skewed to basic and acidic residues. The catalytic stretch occupies residues 138-391 (QSHWRYGGDP…NGRVIEASFP (254 aa)). The region spanning 139–390 (SHWRYGGDPP…LNGRVIEASF (252 aa)) is the Alpha-carbonic anhydrase domain. The cysteines at positions 156 and 336 are disulfide-linked. H200 functions as the Proton donor/acceptor in the catalytic mechanism. Residues H226, H228, and H251 each coordinate Zn(2+). 332-333 (TT) is a binding site for substrate. N346 carries N-linked (GlcNAc...) asparagine glycosylation. Residues 415 to 435 (ILALVFGLLFAVTSVAFLVQM) traverse the membrane as a helical segment. Topologically, residues 436-459 (RRQHRRGTKGGVSYRPAEVAETGA) are cytoplasmic. The residue at position 449 (Y449) is a Phosphotyrosine.

It belongs to the alpha-carbonic anhydrase family. Forms oligomers linked by disulfide bonds. The cofactor is Zn(2+). In terms of processing, asn-346 bears high-mannose type glycan structures. As to expression, expressed primarily in carcinoma cells lines. Expression is restricted to very few normal tissues and the most abundant expression is found in the epithelial cells of gastric mucosa.

The protein localises to the nucleus. The protein resides in the nucleolus. It is found in the cell membrane. Its subcellular location is the cell projection. It localises to the microvillus membrane. The catalysed reaction is hydrogencarbonate + H(+) = CO2 + H2O. With respect to regulation, inhibited by coumarins, saccharin, sulfonamide derivatives such as acetazolamide (AZA) and Foscarnet (phosphonoformate trisodium salt). In terms of biological role, catalyzes the interconversion between carbon dioxide and water and the dissociated ions of carbonic acid (i.e. bicarbonate and hydrogen ions). In Homo sapiens (Human), this protein is Carbonic anhydrase 9 (CA9).